A 209-amino-acid polypeptide reads, in one-letter code: Ribose 1,5-bisphosphate phosphokinase PhnN (209 aa).

27–34 (GPSGGGKD) provides a ligand contact to ATP.

This sequence belongs to the ribose 1,5-bisphosphokinase family.

The catalysed reaction is alpha-D-ribose 1,5-bisphosphate + ATP = 5-phospho-alpha-D-ribose 1-diphosphate + ADP. The protein operates within metabolic intermediate biosynthesis; 5-phospho-alpha-D-ribose 1-diphosphate biosynthesis; 5-phospho-alpha-D-ribose 1-diphosphate from D-ribose 5-phosphate (route II): step 3/3. Its function is as follows. Catalyzes the phosphorylation of ribose 1,5-bisphosphate to 5-phospho-D-ribosyl alpha-1-diphosphate (PRPP). The sequence is that of Ribose 1,5-bisphosphate phosphokinase PhnN from Chelativorans sp. (strain BNC1).